The chain runs to 157 residues: MRCPFCGHMESQVKDSRPSEDGAAIRRRRLCPECGGRFTTFERVQLRELTIVKRSGRRSPFDREKLVRSISIATRKRPVDPERVERMVNGIVRQLESQGETELPSSAVGEMVMKALKSLDDVAYVRYASVYRDFRETSDFAKFLGAEGLSDVADDEL.

Residues 3–34 fold into a zinc finger; sequence CPFCGHMESQVKDSRPSEDGAAIRRRRLCPEC. In terms of domain architecture, ATP-cone spans 49-139; it reads LTIVKRSGRR…VYRDFRETSD (91 aa).

The protein belongs to the NrdR family. Requires Zn(2+) as cofactor.

In terms of biological role, negatively regulates transcription of bacterial ribonucleotide reductase nrd genes and operons by binding to NrdR-boxes. The protein is Transcriptional repressor NrdR of Caulobacter sp. (strain K31).